The sequence spans 169 residues: CKLF-like MARVEL transmembrane domain-containing protein 2A (169 aa).

4 helical membrane-spanning segments follow: residues 40 to 60, 69 to 89, 98 to 118, and 136 to 156; these read FWLS…ISAL, HPVL…FIFL, IPFV…CVFL, and YLTA…DMLL. One can recognise an MARVEL domain in the interval 40-162; it reads FWLSGHAVFK…DMLLQFQHFR (123 aa).

Belongs to the chemokine-like factor family.

It is found in the membrane. The chain is CKLF-like MARVEL transmembrane domain-containing protein 2A (Cmtm2a) from Mus musculus (Mouse).